A 128-amino-acid polypeptide reads, in one-letter code: Ribonuclease pancreatic (128 aa).

The segment at 1–25 (KESSAKKFQRQHIDSSGSPSTNPNY) is disordered. Residues Lys-7 and Arg-10 each coordinate substrate. His-12 functions as the Proton acceptor in the catalytic mechanism. A compositionally biased stretch (polar residues) spans 14–25 (DSSGSPSTNPNY). 4 disulfides stabilise this stretch: Cys-26–Cys-84, Cys-40–Cys-95, Cys-58–Cys-110, and Cys-65–Cys-72. An N-linked (GlcNAc...) asparagine glycan is attached at Asn-34. Substrate is bound by residues 41 to 45 (KPVNT), Lys-66, and Arg-85. His-119 (proton donor) is an active-site residue.

The protein belongs to the pancreatic ribonuclease family. Monomer. Interacts with and forms tight 1:1 complexes with RNH1. Dimerization of two such complexes may occur. Interaction with RNH1 inhibits this protein. As to expression, pancreas.

Its subcellular location is the secreted. It carries out the reaction an [RNA] containing cytidine + H2O = an [RNA]-3'-cytidine-3'-phosphate + a 5'-hydroxy-ribonucleotide-3'-[RNA].. It catalyses the reaction an [RNA] containing uridine + H2O = an [RNA]-3'-uridine-3'-phosphate + a 5'-hydroxy-ribonucleotide-3'-[RNA].. In terms of biological role, endonuclease that catalyzes the cleavage of RNA on the 3' side of pyrimidine nucleotides. Acts on single-stranded and double-stranded RNA. The sequence is that of Ribonuclease pancreatic (RNASE1) from Proechimys guairae (Guaira spiny rat).